A 28-amino-acid polypeptide reads, in one-letter code: Cruzioseptin-3 (28 aa).

Q25 carries the post-translational modification Glutamine amide. Positions E27–Q28 are excised as a propeptide.

In terms of tissue distribution, expressed by the skin glands.

It is found in the secreted. Has antimicrobial activity against Gram-negative bacterium E.coli (MIC=13.32 uM), against Gram-positive bacterium S.aureus (MIC=13.32 uM) and against fungus C.albicans (MIC=13.32 uM). At higher concentrations also has a bactericidal and fungicidal effect. Has hemagglutinating activity against horse erythrocytes. This is Cruzioseptin-3 from Cruziohyla calcarifer (Splendid leaf frog).